Here is a 572-residue protein sequence, read N- to C-terminus: Enolase 4 (572 aa).

The interval 181 to 204 (IEPVPSPVTSPALGKKKGSGKGKK) is disordered. Residues 194–204 (GKKKGSGKGKK) show a composition bias toward basic residues. Glu288 provides a ligand contact to substrate. The active-site Proton acceptor is the Lys468. Residue Lys519 coordinates substrate.

Belongs to the enolase family.

The enzyme catalyses (2R)-2-phosphoglycerate = phosphoenolpyruvate + H2O. Its pathway is carbohydrate degradation; glycolysis; pyruvate from D-glyceraldehyde 3-phosphate: step 4/5. The protein is Enolase 4 (eno4) of Xenopus laevis (African clawed frog).